A 114-amino-acid polypeptide reads, in one-letter code: T cell receptor beta variable 6-9 (114 aa).

An N-terminal signal peptide occupies residues 1-21 (MSIGLLCCVAFSLLWAGPVNA). An Ig-like domain is found at 22-114 (GVTQTPKFHI…TSVYFCASSY (93 aa)). A disulfide bridge connects residues cysteine 42 and cysteine 110. Asparagine 84 carries an N-linked (GlcNAc...) asparagine glycan.

Alpha-beta TR is a heterodimer composed of an alpha and beta chain; disulfide-linked. The alpha-beta TR is associated with the transmembrane signaling CD3 coreceptor proteins to form the TR-CD3 (TcR or TCR). The assembly of alpha-beta TR heterodimers with CD3 occurs in the endoplasmic reticulum where a single alpha-beta TR heterodimer associates with one CD3D-CD3E heterodimer, one CD3G-CD3E heterodimer and one CD247 homodimer forming a stable octameric structure. CD3D-CD3E and CD3G-CD3E heterodimers preferentially associate with TR alpha and TR beta chains, respectively. The association of the CD247 homodimer is the last step of TcR assembly in the endoplasmic reticulum and is required for transport to the cell surface.

The protein resides in the cell membrane. Functionally, v region of the variable domain of T cell receptor (TR) beta chain that participates in the antigen recognition. Alpha-beta T cell receptors are antigen specific receptors which are essential to the immune response and are present on the cell surface of T lymphocytes. Recognize peptide-major histocompatibility (MH) (pMH) complexes that are displayed by antigen presenting cells (APC), a prerequisite for efficient T cell adaptive immunity against pathogens. Binding of alpha-beta TR to pMH complex initiates TR-CD3 clustering on the cell surface and intracellular activation of LCK that phosphorylates the ITAM motifs of CD3G, CD3D, CD3E and CD247 enabling the recruitment of ZAP70. In turn ZAP70 phosphorylates LAT, which recruits numerous signaling molecules to form the LAT signalosome. The LAT signalosome propagates signal branching to three major signaling pathways, the calcium, the mitogen-activated protein kinase (MAPK) kinase and the nuclear factor NF-kappa-B (NF-kB) pathways, leading to the mobilization of transcription factors that are critical for gene expression and essential for T cell growth and differentiation. The T cell repertoire is generated in the thymus, by V-(D)-J rearrangement. This repertoire is then shaped by intrathymic selection events to generate a peripheral T cell pool of self-MH restricted, non-autoaggressive T cells. Post-thymic interaction of alpha-beta TR with the pMH complexes shapes TR structural and functional avidity. This Homo sapiens (Human) protein is T cell receptor beta variable 6-9.